The primary structure comprises 492 residues: Trehalose-phosphatase (492 aa).

Residues 1–55 are disordered; it reads MTETVTDQGKQRSSKLQKNEAAKDEQVEGKGKETLESGTDKSAEQNSSLLVGQPD. The span at 17-43 shows a compositional bias: basic and acidic residues; sequence QKNEAAKDEQVEGKGKETLESGTDKSA. 2 residues coordinate Mg(2+): D213 and D215. D215 acts as the Proton donor/acceptor in catalysis. Residue 332–334 participates in substrate binding; the sequence is QRK. A Mg(2+)-binding site is contributed by D424.

It belongs to the gob-1 trehalose phosphatase family. Mg(2+) is required as a cofactor.

It catalyses the reaction alpha,alpha-trehalose 6-phosphate + H2O = alpha,alpha-trehalose + phosphate. Its activity is regulated as follows. Inhibited by trehalose 6-sulfate. Its function is as follows. Catalyzes the hydrolysis of trehalose 6-phosphate to trehalose and phosphate; prevents the accumulation of toxic levels of trehalose 6-phosphate. This is Trehalose-phosphatase from Brugia malayi (Filarial nematode worm).